We begin with the raw amino-acid sequence, 366 residues long: Tetraacyldisaccharide 4'-kinase (366 aa).

65-72 is an ATP binding site; the sequence is TVGGTGKT. The tract at residues 343–366 is disordered; it reads AKSTPASGGATGLNKEHQDGQPAA. The segment covering 356-366 has biased composition (basic and acidic residues); sequence NKEHQDGQPAA.

The protein belongs to the LpxK family.

It carries out the reaction a lipid A disaccharide + ATP = a lipid IVA + ADP + H(+). The protein operates within glycolipid biosynthesis; lipid IV(A) biosynthesis; lipid IV(A) from (3R)-3-hydroxytetradecanoyl-[acyl-carrier-protein] and UDP-N-acetyl-alpha-D-glucosamine: step 6/6. Functionally, transfers the gamma-phosphate of ATP to the 4'-position of a tetraacyldisaccharide 1-phosphate intermediate (termed DS-1-P) to form tetraacyldisaccharide 1,4'-bis-phosphate (lipid IVA). This is Tetraacyldisaccharide 4'-kinase from Cupriavidus pinatubonensis (strain JMP 134 / LMG 1197) (Cupriavidus necator (strain JMP 134)).